Reading from the N-terminus, the 232-residue chain is Ribose-5-phosphate isomerase A (232 aa).

Residues 28–31, 83–86, and 96–99 contribute to the substrate site; these read TGST, DGAD, and KGGG. Glu105 acts as the Proton acceptor in catalysis. Lys123 serves as a coordination point for substrate.

The protein belongs to the ribose 5-phosphate isomerase family. As to quaternary structure, homodimer.

The enzyme catalyses aldehydo-D-ribose 5-phosphate = D-ribulose 5-phosphate. The protein operates within carbohydrate degradation; pentose phosphate pathway; D-ribose 5-phosphate from D-ribulose 5-phosphate (non-oxidative stage): step 1/1. Catalyzes the reversible conversion of ribose-5-phosphate to ribulose 5-phosphate. The sequence is that of Ribose-5-phosphate isomerase A from Rhizobium etli (strain ATCC 51251 / DSM 11541 / JCM 21823 / NBRC 15573 / CFN 42).